The sequence spans 201 residues: uncharacterized protein (201 aa).

May have a role in tissue tropism within the insect larvae. This is an uncharacterized protein from Lepidoptera (butterflies and moths).